The sequence spans 118 residues: UPF0102 protein Franean1_1156 (118 aa).

This sequence belongs to the UPF0102 family.

The polypeptide is UPF0102 protein Franean1_1156 (Parafrankia sp. (strain EAN1pec)).